Consider the following 151-residue polypeptide: Large ribosomal subunit protein bL9 (151 aa).

This sequence belongs to the bacterial ribosomal protein bL9 family.

Functionally, binds to the 23S rRNA. The chain is Large ribosomal subunit protein bL9 from Lacticaseibacillus casei (strain BL23) (Lactobacillus casei).